Here is a 316-residue protein sequence, read N- to C-terminus: Beta-ketoacyl-[acyl-carrier-protein] synthase III 1 (316 aa).

Residues C112 and H243 contribute to the active site. Residues 244 to 248 (QANYR) are ACP-binding. The active site involves N273.

Belongs to the thiolase-like superfamily. FabH family. As to quaternary structure, homodimer.

It localises to the cytoplasm. It catalyses the reaction malonyl-[ACP] + acetyl-CoA + H(+) = 3-oxobutanoyl-[ACP] + CO2 + CoA. Its pathway is lipid metabolism; fatty acid biosynthesis. In terms of biological role, catalyzes the condensation reaction of fatty acid synthesis by the addition to an acyl acceptor of two carbons from malonyl-ACP. Catalyzes the first condensation reaction which initiates fatty acid synthesis and may therefore play a role in governing the total rate of fatty acid production. Possesses both acetoacetyl-ACP synthase and acetyl transacylase activities. Its substrate specificity determines the biosynthesis of branched-chain and/or straight-chain of fatty acids. This is Beta-ketoacyl-[acyl-carrier-protein] synthase III 1 from Vibrio vulnificus (strain CMCP6).